The sequence spans 217 residues: Twisted gastrulation protein homolog 1-A (217 aa).

Positions 1 to 26 (MRPALFLCPVLISVLFLLSSLSLISG) are cleaved as a signal peptide. 2 N-linked (GlcNAc...) asparagine glycosylation sites follow: asparagine 53 and asparagine 147.

Belongs to the twisted gastrulation protein family.

The protein resides in the secreted. Its function is as follows. Involved in dorsal-ventral patterning. Appears to function predominantly as a ventralizing factor, through its actions as a BMP signaling agonist, acting through both chd-dependent and chd-independent mechanisms. May also antagonize BMP signaling, probably via formation of ternary complexes with chd and BMPs, resulting in dorsalization. The sequence is that of Twisted gastrulation protein homolog 1-A (twsg1a) from Danio rerio (Zebrafish).